Reading from the N-terminus, the 372-residue chain is Cytoplasmic tRNA 2-thiolation protein 1 (372 aa).

A disordered region spans residues 335 to 372; that stretch reads GKKEDGGCGSGGGGCGCAGAADETENEETRKRLKDLQF. The span at 341–351 shows a compositional bias: gly residues; that stretch reads GCGSGGGGCGC. Positions 361–372 are enriched in basic and acidic residues; that stretch reads EETRKRLKDLQF.

Belongs to the TtcA family. CTU1/NCS6/ATPBD3 subfamily.

The protein localises to the cytoplasm. It functions in the pathway tRNA modification; 5-methoxycarbonylmethyl-2-thiouridine-tRNA biosynthesis. In terms of biological role, plays a central role in 2-thiolation of mcm(5)S(2)U at tRNA wobble positions of tRNA(Lys), tRNA(Glu) and tRNA(Gln). Directly binds tRNAs and probably acts by catalyzing adenylation of tRNAs, an intermediate required for 2-thiolation. It is unclear whether it acts as a sulfurtransferase that transfers sulfur from thiocarboxylated URM1 onto the uridine of tRNAs at wobble position. This is Cytoplasmic tRNA 2-thiolation protein 1 from Caenorhabditis briggsae.